We begin with the raw amino-acid sequence, 103 residues long: UPF0145 protein pXO2-45/BXB0052/GBAA_pXO2_0052 (103 aa).

The protein belongs to the UPF0145 family.

In Bacillus anthracis, this protein is UPF0145 protein pXO2-45/BXB0052/GBAA_pXO2_0052.